A 109-amino-acid polypeptide reads, in one-letter code: Large ribosomal subunit protein uL24 (109 aa).

This sequence belongs to the universal ribosomal protein uL24 family. As to quaternary structure, part of the 50S ribosomal subunit.

In terms of biological role, one of two assembly initiator proteins, it binds directly to the 5'-end of the 23S rRNA, where it nucleates assembly of the 50S subunit. Its function is as follows. One of the proteins that surrounds the polypeptide exit tunnel on the outside of the subunit. The chain is Large ribosomal subunit protein uL24 from Ehrlichia ruminantium (strain Gardel).